The sequence spans 396 residues: Probable sugar efflux transporter (396 aa).

12 helical membrane passes run 15 to 35 (VVTLAIAAFIFNTTEFVPVGL), 50 to 70 (VGIMLTIYAWVVAVMSLPFML), 81 to 101 (LICLFVLFIASHVLSFLAWNF), 103 to 123 (VLVISRIGIAFAHAIFWSITA), 136 to 156 (AQALSLIATGTALAMVLGLPI), 169 to 189 (TFFAIGMGALITLLCLIKLLP), 202 to 222 (LPLLFRCPALMSLYVLTVVVV), 246 to 266 (FATVLLLLLGGAGIIGSLVFG), 275 to 295 (SLVSIAIALLVVCLLLLLPAA), 301 to 321 (LAILSIFWGIAIMVIGLGMQV), 333 to 353 (VAMALFSGIFNIGIGAGALVG), and 364 to 384 (AIGYIGAIPACAALVWAVLIF).

This sequence belongs to the major facilitator superfamily. SotB (TC 2.A.1.2) family.

It is found in the cell inner membrane. Functionally, involved in the efflux of sugars. The physiological role may be the reduction of the intracellular concentration of toxic sugars or sugar metabolites. The sequence is that of Probable sugar efflux transporter from Salmonella paratyphi A (strain ATCC 9150 / SARB42).